The sequence spans 461 residues: CBL-interacting protein kinase 1 (461 aa).

The Protein kinase domain occupies 19 to 274; sequence YEIGRTLGEG…IAGIKEHEWF (256 aa). ATP is bound by residues 25–33 and Lys48; that span reads LGEGNFGKV. The Proton acceptor role is filled by Asp142. The segment at 160 to 189 is activation loop; that stretch reads DFGLSALPQHLGNDGLLHTTCGSPNYIAPE. Residues 308-332 form the NAF domain; that stretch reads EKPTHINAFQLIGMASALDLSGFFE. The PPI stretch occupies residues 338-367; that stretch reads QRKIRFTSTHSPKDLFDKIENVVTEMGFQV.

This sequence belongs to the protein kinase superfamily. CAMK Ser/Thr protein kinase family. SNF1 subfamily. Mn(2+) serves as cofactor.

It catalyses the reaction L-seryl-[protein] + ATP = O-phospho-L-seryl-[protein] + ADP + H(+). The enzyme catalyses L-threonyl-[protein] + ATP = O-phospho-L-threonyl-[protein] + ADP + H(+). In terms of biological role, CIPK serine-threonine protein kinases interact with CBL proteins. Binding of a CBL protein to the regulatory NAF domain of CIPK protein lead to the activation of the kinase in a calcium-dependent manner. In Oryza sativa subsp. japonica (Rice), this protein is CBL-interacting protein kinase 1 (CIPK1).